Reading from the N-terminus, the 466-residue chain is ATP synthase subunit beta (466 aa).

ATP is bound at residue 152 to 159 (GGAGVGKT).

The protein belongs to the ATPase alpha/beta chains family. As to quaternary structure, F-type ATPases have 2 components, CF(1) - the catalytic core - and CF(0) - the membrane proton channel. CF(1) has five subunits: alpha(3), beta(3), gamma(1), delta(1), epsilon(1). CF(0) has three main subunits: a(1), b(2) and c(9-12). The alpha and beta chains form an alternating ring which encloses part of the gamma chain. CF(1) is attached to CF(0) by a central stalk formed by the gamma and epsilon chains, while a peripheral stalk is formed by the delta and b chains.

It localises to the cell inner membrane. It carries out the reaction ATP + H2O + 4 H(+)(in) = ADP + phosphate + 5 H(+)(out). In terms of biological role, produces ATP from ADP in the presence of a proton gradient across the membrane. The catalytic sites are hosted primarily by the beta subunits. The protein is ATP synthase subunit beta of Sulfurovum sp. (strain NBC37-1).